The following is an 87-amino-acid chain: UPF0367 protein Syncc9902_0316 (87 aa).

Belongs to the UPF0367 family.

This chain is UPF0367 protein Syncc9902_0316, found in Synechococcus sp. (strain CC9902).